A 568-amino-acid polypeptide reads, in one-letter code: 3-(3-hydroxy-phenyl)propionate/3-hydroxycinnamic acid hydroxylase (568 aa).

FAD-binding positions include 13-42 (DVVI…IVEE) and 278-288 (FRKGRMFLAGD).

This sequence belongs to the PheA/TfdB FAD monooxygenase family. It depends on FAD as a cofactor.

It carries out the reaction 3-(3-hydroxyphenyl)propanoate + NADH + O2 + H(+) = 3-(2,3-dihydroxyphenyl)propanoate + NAD(+) + H2O. It catalyses the reaction (2E)-3-(3-hydroxyphenyl)prop-2-enoate + NADH + O2 + H(+) = (2E)-3-(2,3-dihydroxyphenyl)prop-2-enoate + NAD(+) + H2O. Its pathway is aromatic compound metabolism; 3-phenylpropanoate degradation. Its function is as follows. Catalyzes the insertion of one atom of molecular oxygen into position 2 of the phenyl ring of 3-(3-hydroxyphenyl)propionate (3-HPP) and hydroxycinnamic acid (3HCI). This is 3-(3-hydroxy-phenyl)propionate/3-hydroxycinnamic acid hydroxylase from Mycobacterium sp. (strain JLS).